The chain runs to 197 residues: Cerebellin-3 (197 aa).

An N-terminal signal peptide occupies residues 1–24 (MGTEWHKPKLSLALVLLTLEAGWA). The C1q domain maps to 59–197 (APPGRVAFAA…SFSGFLIFPL (139 aa)). A necessary for interaction with CBLN3, and homotrimerization region spans residues 64–197 (VAFAAVRSHH…SFSGFLIFPL (134 aa)). Asn-82 carries an N-linked (GlcNAc...) asparagine glycan.

As to quaternary structure, heterohexamer; disulfide-linked heterotrimers. Interacts with CBLN1. May also form oligomers with CBLN2 and CBLN4. In terms of tissue distribution, expressed in brain, restricted to the cerebellar cortex. Within the cerebellum, expressed in granule layers (at protein level). Also detected in postsynaptic Purkinje cell spines (at protein level).

The protein localises to the endoplasmic reticulum. It is found in the golgi apparatus. The protein resides in the cis-Golgi network. Its subcellular location is the secreted. It localises to the synapse. Functionally, may be involved in synaptic functions in the CNS. The polypeptide is Cerebellin-3 (Cbln3) (Mus musculus (Mouse)).